The sequence spans 463 residues: ATP synthase subunit beta (463 aa).

151–158 serves as a coordination point for ATP; it reads GGAGVGKT.

It belongs to the ATPase alpha/beta chains family. F-type ATPases have 2 components, CF(1) - the catalytic core - and CF(0) - the membrane proton channel. CF(1) has five subunits: alpha(3), beta(3), gamma(1), delta(1), epsilon(1). CF(0) has three main subunits: a(1), b(2) and c(9-12). The alpha and beta chains form an alternating ring which encloses part of the gamma chain. CF(1) is attached to CF(0) by a central stalk formed by the gamma and epsilon chains, while a peripheral stalk is formed by the delta and b chains.

The protein localises to the cell membrane. The catalysed reaction is ATP + H2O + 4 H(+)(in) = ADP + phosphate + 5 H(+)(out). Its function is as follows. Produces ATP from ADP in the presence of a proton gradient across the membrane. The catalytic sites are hosted primarily by the beta subunits. The chain is ATP synthase subunit beta from Clostridium botulinum (strain Loch Maree / Type A3).